A 227-amino-acid chain; its full sequence is Ribosomal RNA large subunit methyltransferase E (227 aa).

The S-adenosyl-L-methionine site is built by Gly-78, Trp-80, Asp-103, Asp-119, and Asp-143. Lys-183 (proton acceptor) is an active-site residue.

This sequence belongs to the class I-like SAM-binding methyltransferase superfamily. RNA methyltransferase RlmE family.

It localises to the cytoplasm. The catalysed reaction is uridine(2552) in 23S rRNA + S-adenosyl-L-methionine = 2'-O-methyluridine(2552) in 23S rRNA + S-adenosyl-L-homocysteine + H(+). Specifically methylates the uridine in position 2552 of 23S rRNA at the 2'-O position of the ribose in the fully assembled 50S ribosomal subunit. The chain is Ribosomal RNA large subunit methyltransferase E from Rickettsia canadensis (strain McKiel).